The chain runs to 444 residues: 23S rRNA (uracil(1939)-C(5))-methyltransferase RlmD (444 aa).

The 63-residue stretch at 5-67 folds into the TRAM domain; sequence RNRFDRTPFQ…RHFDEAKTVE (63 aa). [4Fe-4S] cluster-binding residues include C80, C86, C89, and C168. Q276, F305, N310, E326, D353, and D374 together coordinate S-adenosyl-L-methionine. The Nucleophile role is filled by C400.

This sequence belongs to the class I-like SAM-binding methyltransferase superfamily. RNA M5U methyltransferase family. RlmD subfamily.

It carries out the reaction uridine(1939) in 23S rRNA + S-adenosyl-L-methionine = 5-methyluridine(1939) in 23S rRNA + S-adenosyl-L-homocysteine + H(+). Functionally, catalyzes the formation of 5-methyl-uridine at position 1939 (m5U1939) in 23S rRNA. This chain is 23S rRNA (uracil(1939)-C(5))-methyltransferase RlmD, found in Xanthomonas campestris pv. campestris (strain 8004).